Reading from the N-terminus, the 227-residue chain is Ribosomal RNA large subunit methyltransferase E (227 aa).

S-adenosyl-L-methionine contacts are provided by glycine 78, tryptophan 80, aspartate 103, aspartate 119, and aspartate 143. Lysine 183 functions as the Proton acceptor in the catalytic mechanism.

The protein belongs to the class I-like SAM-binding methyltransferase superfamily. RNA methyltransferase RlmE family.

It localises to the cytoplasm. The enzyme catalyses uridine(2552) in 23S rRNA + S-adenosyl-L-methionine = 2'-O-methyluridine(2552) in 23S rRNA + S-adenosyl-L-homocysteine + H(+). Its function is as follows. Specifically methylates the uridine in position 2552 of 23S rRNA at the 2'-O position of the ribose in the fully assembled 50S ribosomal subunit. This chain is Ribosomal RNA large subunit methyltransferase E, found in Rickettsia akari (strain Hartford).